Consider the following 101-residue polypeptide: Pro-corazonin (101 aa).

The first 19 residues, 1–19 (MVTNITLILTLMTLASVTA), serve as a signal peptide directing secretion. A Pyrrolidone carboxylic acid modification is found at Q20. N30 carries the asparagine amide modification.

This sequence belongs to the corazonin family.

The protein localises to the secreted. In terms of biological role, cardioactive peptide. Corazonin is probably involved in the physiological regulation of the heart beat. The sequence is that of Pro-corazonin (crz) from Bombyx mori (Silk moth).